The sequence spans 330 residues: MYTEINEMLTPKVLKVQAESPYKARIVLEPLERGFGHTLGNALRRILLSSMPGSAITEASIDGVLHEYSTIEGVQEDVVDLLLNLKSVAIKLTVGNEAQVTLNKEGPCQVTAGDIQLTHGQEIINPELVIANLNEKGKLNMTLKVERGIGFHNTDAFVRYHEDEIEKKTVGKLKIDNSFSPVKKVAYFVDSARVENRTDLDKLTIELETNGTIDAEEAIRISASILQRQLHAFVDMKFEESRADNKERNDFDPVLLRSVDDLELTVRSANCLKAENIHYIGDLVQRTESELLKTPNLGKKSLTEIKDVLASRSLSLGMKLENWPPASLGE.

Residues 1 to 237 (MYTEINEMLT…RQLHAFVDMK (237 aa)) form an alpha N-terminal domain (alpha-NTD) region. Positions 251 to 330 (FDPVLLRSVD…ENWPPASLGE (80 aa)) are alpha C-terminal domain (alpha-CTD).

The protein belongs to the RNA polymerase alpha chain family. As to quaternary structure, homodimer. The RNAP catalytic core consists of 2 alpha, 1 beta, 1 beta' and 1 omega subunit. When a sigma factor is associated with the core the holoenzyme is formed, which can initiate transcription.

The catalysed reaction is RNA(n) + a ribonucleoside 5'-triphosphate = RNA(n+1) + diphosphate. DNA-dependent RNA polymerase catalyzes the transcription of DNA into RNA using the four ribonucleoside triphosphates as substrates. The chain is DNA-directed RNA polymerase subunit alpha from Legionella pneumophila (strain Corby).